Reading from the N-terminus, the 433-residue chain is Glutamyl-tRNA reductase (433 aa).

Residues 49-52 (TCNR), S109, 114-116 (EGQ), and Q120 each bind substrate. Catalysis depends on C50, which acts as the Nucleophile. Position 198 to 203 (198 to 203 (GAGRMS)) interacts with NADP(+).

It belongs to the glutamyl-tRNA reductase family. In terms of assembly, homodimer.

It carries out the reaction (S)-4-amino-5-oxopentanoate + tRNA(Glu) + NADP(+) = L-glutamyl-tRNA(Glu) + NADPH + H(+). It functions in the pathway porphyrin-containing compound metabolism; protoporphyrin-IX biosynthesis; 5-aminolevulinate from L-glutamyl-tRNA(Glu): step 1/2. Its pathway is porphyrin-containing compound metabolism; chlorophyll biosynthesis. Its function is as follows. Catalyzes the NADPH-dependent reduction of glutamyl-tRNA(Glu) to glutamate 1-semialdehyde (GSA). This is Glutamyl-tRNA reductase from Prochlorococcus marinus subsp. pastoris (strain CCMP1986 / NIES-2087 / MED4).